We begin with the raw amino-acid sequence, 201 residues long: Probable GTP-binding protein EngB (201 aa).

In terms of domain architecture, EngB-type G spans 21–191 (AAPQIILAGR…WNLLDVTAIP (171 aa)). Residues 29 to 36 (GRSNVGKS), 56 to 60 (GKTRS), 75 to 78 (DLPG), 142 to 145 (TKSD), and 168 to 172 (ICVSS) each bind GTP. Residues S36 and T58 each contribute to the Mg(2+) site.

It belongs to the TRAFAC class TrmE-Era-EngA-EngB-Septin-like GTPase superfamily. EngB GTPase family. Requires Mg(2+) as cofactor.

In terms of biological role, necessary for normal cell division and for the maintenance of normal septation. The polypeptide is Probable GTP-binding protein EngB (Maridesulfovibrio salexigens (strain ATCC 14822 / DSM 2638 / NCIMB 8403 / VKM B-1763) (Desulfovibrio salexigens)).